The chain runs to 223 residues: Serum amyloid P-component (223 aa).

The N-terminal stretch at 1-19 (MDKMLFWVSVFTIFLDVFA) is a signal peptide. Residues 24–223 (DKKVFVFPRE…YVIIKPRVWD (200 aa)) form the Pentraxin (PTX) domain. The cysteines at positions 55 and 114 are disulfide-linked. Ca(2+) contacts are provided by D77, N78, E155, Q156, D157, and Q167. An N-linked (GlcNAc...) asparagine glycan is attached at N198.

The protein belongs to the pentraxin family. Homopentamer. Pentraxin (or pentaxin) have a discoid arrangement of 5 non-covalently bound subunits. Ca(2+) is required as a cofactor.

Its subcellular location is the secreted. The polypeptide is Serum amyloid P-component (PTX2) (Cavia porcellus (Guinea pig)).